The sequence spans 358 residues: Flap endonuclease 1 (358 aa).

The tract at residues 1–103 is N-domain; the sequence is MGIKRLSKLI…HEFEKRTKRR (103 aa). Asp34 lines the Mg(2+) pocket. Residues Arg47 and Arg69 each contribute to the DNA site. Residues Asp85, Glu157, Glu159, Asp178, and Asp180 each contribute to the Mg(2+) site. The segment at 121-252 is I-domain; the sequence is LVSKYDRMNV…KRAFEYIKKY (132 aa). A DNA-binding site is contributed by Glu157. DNA contacts are provided by Gly230 and Asp232. A Mg(2+)-binding site is contributed by Asp232. The interval 346–354 is interaction with PCNA; it reads KQTRIDSFF.

This sequence belongs to the XPG/RAD2 endonuclease family. FEN1 subfamily. In terms of assembly, interacts with PCNA. Three molecules of FEN1 bind to one PCNA trimer with each molecule binding to one PCNA monomer. PCNA stimulates the nuclease activity without altering cleavage specificity. Requires Mg(2+) as cofactor. Post-translationally, phosphorylated. Phosphorylation upon DNA damage induces relocalization to the nuclear plasma.

Its subcellular location is the nucleus. The protein localises to the nucleolus. The protein resides in the nucleoplasm. It is found in the mitochondrion. In terms of biological role, structure-specific nuclease with 5'-flap endonuclease and 5'-3' exonuclease activities involved in DNA replication and repair. During DNA replication, cleaves the 5'-overhanging flap structure that is generated by displacement synthesis when DNA polymerase encounters the 5'-end of a downstream Okazaki fragment. It enters the flap from the 5'-end and then tracks to cleave the flap base, leaving a nick for ligation. Also involved in the long patch base excision repair (LP-BER) pathway, by cleaving within the apurinic/apyrimidinic (AP) site-terminated flap. Acts as a genome stabilization factor that prevents flaps from equilibrating into structures that lead to duplications and deletions. Also possesses 5'-3' exonuclease activity on nicked or gapped double-stranded DNA, and exhibits RNase H activity. Also involved in replication and repair of rDNA and in repairing mitochondrial DNA. This Enterocytozoon bieneusi (strain H348) (Microsporidian parasite) protein is Flap endonuclease 1.